The primary structure comprises 426 residues: C4-dicarboxylate transport protein (426 aa).

The next 8 helical transmembrane spans lie at 8-28, 44-64, 78-98, 148-168, 184-204, 222-242, 297-317, and 355-375; these read VLYV…HFYP, LIKM…IAGM, LLYF…ATHL, GEIL…AHVG, ILFG…FGAM, LIGT…GFIA, GYSF…LFIA, and AATL…ILGI.

This sequence belongs to the dicarboxylate/amino acid:cation symporter (DAACS) (TC 2.A.23) family.

It localises to the cell inner membrane. Responsible for the transport of dicarboxylates such as succinate, fumarate, and malate from the periplasm across the membrane. In Paraburkholderia phymatum (strain DSM 17167 / CIP 108236 / LMG 21445 / STM815) (Burkholderia phymatum), this protein is C4-dicarboxylate transport protein.